Reading from the N-terminus, the 432-residue chain is Adenylosuccinate synthetase (432 aa).

Residues 13–19 (GDEGKGK) and 41–43 (GHT) contribute to the GTP site. The Proton acceptor role is filled by D14. Residues D14 and G41 each contribute to the Mg(2+) site. Residues 14 to 17 (DEGK), 39 to 42 (NAGH), T130, R144, Q225, T240, and R304 contribute to the IMP site. H42 (proton donor) is an active-site residue. Residue 300 to 306 (ATTGRKR) coordinates substrate. GTP-binding positions include R306, 332 to 334 (KLD), and 415 to 417 (STG).

The protein belongs to the adenylosuccinate synthetase family. Homodimer. Mg(2+) serves as cofactor.

Its subcellular location is the cytoplasm. It carries out the reaction IMP + L-aspartate + GTP = N(6)-(1,2-dicarboxyethyl)-AMP + GDP + phosphate + 2 H(+). It functions in the pathway purine metabolism; AMP biosynthesis via de novo pathway; AMP from IMP: step 1/2. In terms of biological role, plays an important role in the de novo pathway of purine nucleotide biosynthesis. Catalyzes the first committed step in the biosynthesis of AMP from IMP. This chain is Adenylosuccinate synthetase, found in Vibrio cholerae serotype O1 (strain ATCC 39541 / Classical Ogawa 395 / O395).